The following is a 359-amino-acid chain: Type-1 angiotensin II receptor B (359 aa).

The Extracellular segment spans residues Met1–Asn25. An N-linked (GlcNAc...) asparagine glycan is attached at Asn4. The angiotensin II site is built by Gln15 and Asp17. Intrachain disulfides connect Cys18-Cys274 and Cys101-Cys180. A helical membrane pass occupies residues Tyr26–Phe55. Topologically, residues Tyr56–Thr61 are cytoplasmic. Residues Val62–Ala89 traverse the membrane as a helical segment. The Extracellular segment spans residues Met90–Asn98. The chain crosses the membrane as a helical span at residues His99–Asp125. Over Arg126–Thr141 the chain is Cytoplasmic. The chain crosses the membrane as a helical span at residues Met142–Ile165. Over His166–Thr190 the chain is Extracellular. Arg167 lines the angiotensin II pocket. The N-linked (GlcNAc...) asparagine glycan is linked to Asn176. Phe182, His183, and Tyr184 together coordinate angiotensin II. Asn188 carries an N-linked (GlcNAc...) asparagine glycan. The helical transmembrane segment at Leu191–Thr216 threads the bilayer. Angiotensin II is bound at residue Lys199. The Cytoplasmic segment spans residues Leu217 to Phe239. The chain crosses the membrane as a helical span at residues Arg240–Leu268. Residues Gly269 to Asp278 are Extracellular-facing. The chain crosses the membrane as a helical span at residues Val279–Phe304. The Cytoplasmic segment spans residues Leu305–Glu359. The S-palmitoyl cysteine moiety is linked to residue Cys355.

The protein belongs to the G-protein coupled receptor 1 family. In terms of assembly, interacts with MAS1. Interacts with ARRB1. Interacts with FLNA (via filamin repeat 21); increases PKA-mediated phosphorylation of FLNA. C-terminal Ser or Thr residues may be phosphorylated.

Its subcellular location is the cell membrane. In terms of biological role, receptor for angiotensin II, a vasoconstricting peptide, which acts as a key regulator of blood pressure and sodium retention by the kidney. The activated receptor in turn couples to G-alpha proteins G(q) (GNAQ, GNA11, GNA14 or GNA15) and thus activates phospholipase C and increases the cytosolic Ca(2+) concentrations, which in turn triggers cellular responses such as stimulation of protein kinase C. The protein is Type-1 angiotensin II receptor B (Agtr1b) of Mus musculus (Mouse).